Here is a 424-residue protein sequence, read N- to C-terminus: Serpin-Z2A (424 aa).

The RCL stretch occupies residues 370–394; it reads GTEAAASTACTIRLLSMSYPEDFVA.

The protein belongs to the serpin family.

Probable serine protease inhibitor. The protein is Serpin-Z2A of Oryza sativa subsp. japonica (Rice).